The following is a 241-amino-acid chain: MTCCGCSGGCGSSCGGCGCSGGCGSSCGGCGSSCCCKPVCCCKPVCCCVPACSCSSCGGCKGGCGSCGGCKGSCGSCGGCKGGCGSCGGCGSCGGCKPSCCQSSCCKPCCCQSSCCKPCCSSGCGSSCCQSSCCKPCCCQSSCCKPCCSSGCGSSCCQSSCCKPCCCQSSCCKPCCCQSSCCKPCCCQSSCCKPCCCQSSCCKPCCCQSSCCKPCCCQSSCCKPCCCQSSCCAPVCCQCKI.

Repeat copies occupy residues 35 to 38 (CCKP), 41 to 44 (CCKP), 47 to 50 (CCVP), 105 to 108 (CCKP), 115 to 118 (CCKP), 133 to 136 (CCKP), 143 to 146 (CCKP), 161 to 164 (CCKP), 171 to 174 (CCKP), 181 to 184 (CCKP), 191 to 194 (CCKP), 201 to 204 (CCKP), 211 to 214 (CCKP), 221 to 224 (CCKP), and 231 to 234 (CCAP). The segment at 35 to 234 (CCKPVCCCKP…CCCQSSCCAP (200 aa)) is 15 X 4 AA repeats of C-C-X-P.

Belongs to the KRTAP type 5 family. As to quaternary structure, interacts with hair keratins.

Its function is as follows. In the hair cortex, hair keratin intermediate filaments are embedded in an interfilamentous matrix, consisting of hair keratin-associated protein (KRTAP), which are essential for the formation of a rigid and resistant hair shaft through their extensive disulfide bond cross-linking with abundant cysteine residues of hair keratins. The matrix proteins include the high-sulfur and high-glycine-tyrosine keratins. This Mus musculus (Mouse) protein is Keratin-associated protein 5-5.